The sequence spans 127 residues: MQLPRVTLRQMTWTTSAIVLLGITLLLWSAFRHQESTLAIRAINQGTTMPDGFSVWHHLDANGIRFKSITPKNDTLLITFDSSAQSAAAKVVLDRTFPHGYIIAQQDEDNQASQWLSLLRDTSHRFG.

The Cytoplasmic portion of the chain corresponds to 1-9 (MQLPRVTLR). Residues 10-32 (QMTWTTSAIVLLGITLLLWSAFR) traverse the membrane as a helical segment. Over 33–127 (HQESTLAIRA…LLRDTSHRFG (95 aa)) the chain is Periplasmic.

Belongs to the MzrA family. As to quaternary structure, interacts with EnvZ.

The protein resides in the cell inner membrane. In terms of biological role, modulates the activity of the EnvZ/OmpR two-component regulatory system, probably by directly modulating EnvZ enzymatic activity and increasing stability of phosphorylated OmpR. This Escherichia fergusonii (strain ATCC 35469 / DSM 13698 / CCUG 18766 / IAM 14443 / JCM 21226 / LMG 7866 / NBRC 102419 / NCTC 12128 / CDC 0568-73) protein is Modulator protein MzrA.